A 327-amino-acid chain; its full sequence is Methionyl-tRNA formyltransferase (327 aa).

Residue 121-124 (SLLP) participates in (6S)-5,6,7,8-tetrahydrofolate binding.

The protein belongs to the Fmt family.

It carries out the reaction L-methionyl-tRNA(fMet) + (6R)-10-formyltetrahydrofolate = N-formyl-L-methionyl-tRNA(fMet) + (6S)-5,6,7,8-tetrahydrofolate + H(+). Functionally, attaches a formyl group to the free amino group of methionyl-tRNA(fMet). The formyl group appears to play a dual role in the initiator identity of N-formylmethionyl-tRNA by promoting its recognition by IF2 and preventing the misappropriation of this tRNA by the elongation apparatus. The polypeptide is Methionyl-tRNA formyltransferase (Burkholderia pseudomallei (strain 1106a)).